The sequence spans 274 residues: 2,3,4,5-tetrahydropyridine-2,6-dicarboxylate N-succinyltransferase (274 aa).

This sequence belongs to the transferase hexapeptide repeat family.

Its subcellular location is the cytoplasm. It catalyses the reaction (S)-2,3,4,5-tetrahydrodipicolinate + succinyl-CoA + H2O = (S)-2-succinylamino-6-oxoheptanedioate + CoA. Its pathway is amino-acid biosynthesis; L-lysine biosynthesis via DAP pathway; LL-2,6-diaminopimelate from (S)-tetrahydrodipicolinate (succinylase route): step 1/3. The protein is 2,3,4,5-tetrahydropyridine-2,6-dicarboxylate N-succinyltransferase of Erwinia tasmaniensis (strain DSM 17950 / CFBP 7177 / CIP 109463 / NCPPB 4357 / Et1/99).